The following is a 676-amino-acid chain: PAS domain-containing protein cky-1 (676 aa).

Residues 45–72 (SALNNNSINVPNNNTMGMSSAGSSNGSN) show a composition bias toward low complexity. Residues 45-89 (SALNNNSINVPNNNTMGMSSAGSSNGSNLVNGQQRSTRGASKQRR) are disordered. Positions 73–84 (LVNGQQRSTRGA) are enriched in polar residues. Residues 76–89 (GQQRSTRGASKQRR) form a basic motif region. In terms of domain architecture, bHLH spans 76 to 129 (GQQRSTRGASKQRRDQINVEIQKLRDLLPLSDLIKDRLFQLQVMSLGCIFIRKH). The segment at 90–129 (DQINVEIQKLRDLLPLSDLIKDRLFQLQVMSLGCIFIRKH) is helix-loop-helix motif. Residues 165–215 (MLMVTRSGKILHVSDNASEYLGHSVEEIMCQGDSIYDLVDGRDHGAVQAEL) form the PAS domain. The tract at residues 436–462 (FSCQDSPPPSEEQQPSSPQTPPFTEQP) is disordered.

Heterodimer; efficient DNA binding requires dimerization with another bHLH protein. Forms a heterodimer with ARNT homolog aha-1; binds DNA as heterodimer.

The protein localises to the nucleus. Functionally, transcription factor. Efficient DNA binding requires dimerization with another bHLH protein, such as ARNT homolog aha-1. Regulates transcription of target genes, probably acting in complex with aha-1. In Caenorhabditis elegans, this protein is PAS domain-containing protein cky-1.